A 146-amino-acid polypeptide reads, in one-letter code: UPF0260 protein Spea_2441 (146 aa).

Belongs to the UPF0260 family.

This is UPF0260 protein Spea_2441 from Shewanella pealeana (strain ATCC 700345 / ANG-SQ1).